We begin with the raw amino-acid sequence, 121 residues long: MLKEFKNFILRGNVLDLAVGVIIGAAFTALVKSLVDNLINPLIGMFVQSSALAHLSVTVGKTKFTYGAFLNDVINFVITAFVIFVLIKFINKLFPKKEEIVEEQKNEELETLQEIRDLLKK.

2 helical membrane-spanning segments follow: residues 14 to 34 (VLDLAVGVIIGAAFTALVKSL) and 67 to 87 (GAFLNDVINFVITAFVIFVLI).

It belongs to the MscL family. In terms of assembly, homopentamer.

The protein localises to the cell membrane. Functionally, channel that opens in response to stretch forces in the membrane lipid bilayer. May participate in the regulation of osmotic pressure changes within the cell. This Lactococcus lactis subsp. cremoris (strain SK11) protein is Large-conductance mechanosensitive channel.